Consider the following 531-residue polypeptide: Transactivator/viroplasmin protein (531 aa).

2 disordered regions span residues 80-101 (ASGK…TATG) and 505-531 (CKSE…SVLV). 2 stretches are compositionally biased toward polar residues: residues 91–100 (SATSPEQTAT) and 505–517 (CKSE…TSEE). Residues 518 to 531 (GLQESEDEDFSVLV) show a composition bias toward acidic residues.

It belongs to the caulimoviridae viroplasmin family.

It is found in the host cytoplasm. Its function is as follows. Enhances the translation of downstream ORFs on polycistronic mRNAs. This is Transactivator/viroplasmin protein from Cestrum yellow leaf curling virus (CmYLCV).